The following is a 116-amino-acid chain: Large ribosomal subunit protein uL18 (116 aa).

It belongs to the universal ribosomal protein uL18 family. As to quaternary structure, part of the 50S ribosomal subunit; part of the 5S rRNA/L5/L18/L25 subcomplex. Contacts the 5S and 23S rRNAs.

Its function is as follows. This is one of the proteins that bind and probably mediate the attachment of the 5S RNA into the large ribosomal subunit, where it forms part of the central protuberance. The polypeptide is Large ribosomal subunit protein uL18 (Alcanivorax borkumensis (strain ATCC 700651 / DSM 11573 / NCIMB 13689 / SK2)).